A 641-amino-acid polypeptide reads, in one-letter code: Lipase (641 aa).

A signal peptide spans 1-38 (MKETKHQHTFSIRKSAYGAASVMVASCIFVIGGGVAEA). Disordered regions lie at residues 41 to 174 (STTQ…PSVD) and 206 to 246 (TVSP…KPTV). Low complexity predominate over residues 53–64 (QTSQQETHTHQT). Basic and acidic residues predominate over residues 73–94 (TPEHVDDSKEATPLPEKAESPK). Polar residues-rich tracts occupy residues 95 to 106 (TEVTVQPSSHTQ) and 127 to 139 (PESTIASKSVESN). A compositionally biased stretch (basic and acidic residues) spans 140 to 165 (KATENEMSPVEHHASNVEKREDRLET). Polar residues predominate over residues 227-239 (ENTTAQNKFTSQA). The active-site Nucleophile is the serine 369. Residue glycine 535 coordinates Ca(2+). The active-site Charge relay system is the aspartate 559. Residue aspartate 599 participates in Ca(2+) binding. Histidine 600 (charge relay system) is an active-site residue. Ca(2+) contacts are provided by aspartate 602, aspartate 607, and aspartate 610.

Belongs to the AB hydrolase superfamily. Lipase family. The cofactor is Ca(2+).

The protein localises to the secreted. The enzyme catalyses a triacylglycerol + H2O = a diacylglycerol + a fatty acid + H(+). The catalysed reaction is a 1,2-diacyl-sn-glycero-3-phosphocholine + H2O = a 2-acyl-sn-glycero-3-phosphocholine + a fatty acid + H(+). Has a broad substrate specificity hydrolyzing a variety of triglycerides and phosphatidylcholines. The polypeptide is Lipase (lip) (Staphylococcus hyicus).